The following is a 158-amino-acid chain: Phosphopantetheine adenylyltransferase (158 aa).

Threonine 8 contacts substrate. ATP contacts are provided by residues threonine 8–phenylalanine 9 and histidine 16. Substrate is bound by residues lysine 40, leucine 72, and arginine 86. Residues glycine 87–arginine 89, glutamate 97, and histidine 122–serine 128 each bind ATP.

This sequence belongs to the bacterial CoaD family. In terms of assembly, homohexamer. Requires Mg(2+) as cofactor.

The protein resides in the cytoplasm. The enzyme catalyses (R)-4'-phosphopantetheine + ATP + H(+) = 3'-dephospho-CoA + diphosphate. It functions in the pathway cofactor biosynthesis; coenzyme A biosynthesis; CoA from (R)-pantothenate: step 4/5. Reversibly transfers an adenylyl group from ATP to 4'-phosphopantetheine, yielding dephospho-CoA (dPCoA) and pyrophosphate. The polypeptide is Phosphopantetheine adenylyltransferase (Campylobacter jejuni subsp. jejuni serotype O:6 (strain 81116 / NCTC 11828)).